Here is a 309-residue protein sequence, read N- to C-terminus: Polyprenal reductase (309 aa).

7 consecutive transmembrane segments (helical) span residues 12–32, 72–92, 114–134, 151–171, 184–204, 242–262, and 270–290; these read LPLYLLVSTLGLAISCCFTLI, FYAIGLLTLFICLHTVHSLIY, IPPITPSTSILALLLISLHVA, MNLFHYAVGIVHYIILPISIM, LHVSIDDISLTQWAGAVLFWI, LVSCPHFLFEICIYLSLFLVI, and FIIMFVCINQTFAALITHSWY.

The protein belongs to the steroid 5-alpha reductase family. Polyprenal reductase subfamily.

The protein resides in the endoplasmic reticulum membrane. The enzyme catalyses a di-trans,poly-cis-dolichal + NADP(+) = a di-trans,poly-cis-polyprenal + NADPH + H(+). It functions in the pathway protein modification; protein glycosylation. Plays a key role in early steps of protein N-linked glycosylation by being involved in the conversion of polyprenol into dolichol. Acts as a polyprenal reductase that mediates the reduction of polyprenal into dolichal in a NADP-dependent mechanism. Dolichols are required for the synthesis of dolichol-linked monosaccharides and the oligosaccharide precursor used for N-glycosylation. This is Polyprenal reductase from Caenorhabditis elegans.